Consider the following 198-residue polypeptide: N-acetyltransferase 9-like protein (198 aa).

The 145-residue stretch at 34-178 folds into the N-acetyltransferase domain; it reads EEIRRLTGSE…KEITMELPGE (145 aa).

The protein belongs to the acetyltransferase family. GNAT subfamily.

This is N-acetyltransferase 9-like protein from Caenorhabditis briggsae.